Here is a 177-residue protein sequence, read N- to C-terminus: Large ribosomal subunit protein uL6 (177 aa).

It belongs to the universal ribosomal protein uL6 family. Part of the 50S ribosomal subunit.

This protein binds to the 23S rRNA, and is important in its secondary structure. It is located near the subunit interface in the base of the L7/L12 stalk, and near the tRNA binding site of the peptidyltransferase center. In Agrobacterium fabrum (strain C58 / ATCC 33970) (Agrobacterium tumefaciens (strain C58)), this protein is Large ribosomal subunit protein uL6.